A 525-amino-acid polypeptide reads, in one-letter code: Ankyrin repeat domain-containing protein SOWAHC (525 aa).

The tract at residues Cys84–Thr263 is disordered. Ser88 is subject to Phosphoserine. Over residues Ala101 to Pro112 the composition is skewed to low complexity. Ser126, Ser213, and Ser226 each carry phosphoserine. Over residues Ser230–Asp241 the composition is skewed to gly residues. The segment covering Ser242–Ser251 has biased composition (low complexity). ANK repeat units follow at residues Thr301 to Leu330 and Gly340 to Ile370. The segment at Asp434–Gly525 is disordered. Residues Ile468–Phe477 are compositionally biased toward basic residues. Residues Arg489–Val509 are compositionally biased toward basic and acidic residues.

It belongs to the SOWAH family.

The protein is Ankyrin repeat domain-containing protein SOWAHC (SOWAHC) of Homo sapiens (Human).